The following is a 357-amino-acid chain: Uroporphyrinogen decarboxylase (357 aa).

Residues R27 to R31, D77, Y154, S209, and H330 each bind substrate.

Belongs to the uroporphyrinogen decarboxylase family. Homodimer.

The protein localises to the cytoplasm. The enzyme catalyses uroporphyrinogen III + 4 H(+) = coproporphyrinogen III + 4 CO2. It functions in the pathway porphyrin-containing compound metabolism; protoporphyrin-IX biosynthesis; coproporphyrinogen-III from 5-aminolevulinate: step 4/4. Its function is as follows. Catalyzes the decarboxylation of four acetate groups of uroporphyrinogen-III to yield coproporphyrinogen-III. The polypeptide is Uroporphyrinogen decarboxylase (Acinetobacter baumannii (strain AB0057)).